The sequence spans 317 residues: Melanocyte-stimulating hormone receptor (317 aa).

At 1–37 (MPVQGSQRRLLGSLNSTPTATPRLGLAANQTGARCLE) the chain is on the extracellular side. N-linked (GlcNAc...) asparagine glycosylation occurs at Asn29. A helical membrane pass occupies residues 38 to 63 (VSIPDGLFLSLGLVSLVENVLVVVAI). At 64 to 72 (ARNRNLHSP) the chain is on the cytoplasmic side. The chain crosses the membrane as a helical span at residues 73-93 (MYCFICCLALSDLLVSGSNML). Residues 94–118 (ETAVFLLLEAGALAARAAVVQQLDN) are Extracellular-facing. A helical transmembrane segment spans residues 119-140 (VIDVITCSSMLSSLCFLGAIAV). At 141-163 (DRYISIFYALRYHSIVTLRRARR) the chain is on the cytoplasmic side. Residues 164–183 (VVAAIWVASVLFSTLFIAYC) form a helical membrane-spanning segment. Residues 184–191 (DHAAVLLC) are Extracellular-facing. Residues 192–211 (LVVFFLAMLVLMAVLYVHML) form a helical membrane-spanning segment. At 212 to 240 (ARACQHAQGIAQLHKRQRPAHQGVGLKGA) the chain is on the cytoplasmic side. A helical membrane pass occupies residues 241–266 (ATLTILLGIFFLCWGPFFLHLTLIVL). The Extracellular portion of the chain corresponds to 267-279 (CPQHPTCSCIFKN). A helical membrane pass occupies residues 280-300 (FNLFLTLIICNAIIDPLIYAF). At 301–317 (RSQELRRTLKKVLLCSW) the chain is on the cytoplasmic side. A lipid anchor (S-palmitoyl cysteine) is attached at Cys315.

The protein belongs to the G-protein coupled receptor 1 family. Interacts with MGRN1, but does not undergo MGRN1-mediated ubiquitination; this interaction competes with GNAS-binding and thus inhibits agonist-induced cAMP production. Interacts with OPN3; the interaction results in a decrease in MC1R-mediated cAMP signaling and ultimately a decrease in melanin production in melanocytes.

It localises to the cell membrane. Receptor for MSH (alpha, beta and gamma) and ACTH. The activity of this receptor is mediated by G proteins which activate adenylate cyclase. Mediates melanogenesis, the production of eumelanin (black/brown) and phaeomelanin (red/yellow), via regulation of cAMP signaling in melanocytes. In Trachypithecus obscurus (Dusky leaf-monkey), this protein is Melanocyte-stimulating hormone receptor (MC1R).